The following is a 363-amino-acid chain: Phosphoserine aminotransferase (363 aa).

Arginine 42 contributes to the L-glutamate binding site. 4 residues coordinate pyridoxal 5'-phosphate: tryptophan 105, threonine 155, aspartate 175, and glutamine 198. Lysine 199 carries the post-translational modification N6-(pyridoxal phosphate)lysine. Residue 240 to 241 participates in pyridoxal 5'-phosphate binding; that stretch reads NT.

Belongs to the class-V pyridoxal-phosphate-dependent aminotransferase family. SerC subfamily. As to quaternary structure, homodimer. Pyridoxal 5'-phosphate is required as a cofactor.

It localises to the cytoplasm. It carries out the reaction O-phospho-L-serine + 2-oxoglutarate = 3-phosphooxypyruvate + L-glutamate. The enzyme catalyses 4-(phosphooxy)-L-threonine + 2-oxoglutarate = (R)-3-hydroxy-2-oxo-4-phosphooxybutanoate + L-glutamate. It functions in the pathway amino-acid biosynthesis; L-serine biosynthesis; L-serine from 3-phospho-D-glycerate: step 2/3. Its pathway is cofactor biosynthesis; pyridoxine 5'-phosphate biosynthesis; pyridoxine 5'-phosphate from D-erythrose 4-phosphate: step 3/5. Its function is as follows. Catalyzes the reversible conversion of 3-phosphohydroxypyruvate to phosphoserine and of 3-hydroxy-2-oxo-4-phosphonooxybutanoate to phosphohydroxythreonine. In Herminiimonas arsenicoxydans, this protein is Phosphoserine aminotransferase.